The sequence spans 390 residues: MDSDTLMPELPSDSVGLVAPQTAHFDVPLALACGKTLQSYDLVYETYGKLNASRSNAVLICHALSGHHHAAGYHSREDRKPGWWDAHIGPGKSIDTDRFFVISLNNLGGCHGSTGPCAINPDTGRQWGPDFPMMTVGDWVHSQARLADRLGIERFAAVIGGSLGGMQVLQWSLAYPERIANAVVIAATPKLSAQNIAFNEVARQAIRSDPDFYDGWYAEHDTLPRRGLKLARMVGHITYLSEDAMGSKFGRDLRSDDLNFGYDVEFQVESYLRYQGDTFSTSFDANTYLLMTKALDYFDPAAAHDGDLAAAVAPASCPFLVVSFSTDWRFPPSRSRELVDALIRAGKPVSYVCIDSPHGHDAFLLPETRYQAIFASFMGRVAHDSGLEDS.

Residues Asn-56–Leu-365 enclose the AB hydrolase-1 domain. The active-site Nucleophile is Ser-162. A substrate-binding site is contributed by Arg-232. Residues Asp-327 and His-360 contribute to the active site. Position 361 (Asp-361) interacts with substrate.

The protein belongs to the AB hydrolase superfamily. MetX family. In terms of assembly, homodimer.

It is found in the cytoplasm. It catalyses the reaction L-homoserine + succinyl-CoA = O-succinyl-L-homoserine + CoA. It functions in the pathway amino-acid biosynthesis; L-methionine biosynthesis via de novo pathway; O-succinyl-L-homoserine from L-homoserine: step 1/1. Its function is as follows. Transfers a succinyl group from succinyl-CoA to L-homoserine, forming succinyl-L-homoserine. In vitro, also has serine succinyl transferase activity. The chain is Homoserine O-succinyltransferase from Litchfieldella anticariensis (strain DSM 16096 / CECT 5854 / CIP 108499 / LMG 22089 / FP35) (Halomonas anticariensis).